The chain runs to 588 residues: Adenine deaminase (588 aa).

It belongs to the metallo-dependent hydrolases superfamily. Adenine deaminase family. As to quaternary structure, homodimer. Requires Mn(2+) as cofactor.

It catalyses the reaction adenine + H2O + H(+) = hypoxanthine + NH4(+). The chain is Adenine deaminase from Shigella flexneri.